A 597-amino-acid chain; its full sequence is Probable translation initiation factor IF-2 (597 aa).

The tr-type G domain occupies 4-221 (IRQPIIAVLG…LISGLAQKYL (218 aa)). Positions 13–20 (GHVDHGKT) are G1. 13–20 (GHVDHGKT) provides a ligand contact to GTP. A G2 region spans residues 38–42 (GITQH). Residues 77–80 (DTPG) are G3. Residues 77–81 (DTPGH) and 131–134 (NKID) each bind GTP. Positions 131–134 (NKID) are G4. A G5 region spans residues 199 to 201 (SAK).

Belongs to the TRAFAC class translation factor GTPase superfamily. Classic translation factor GTPase family. IF-2 subfamily.

Function in general translation initiation by promoting the binding of the formylmethionine-tRNA to ribosomes. Seems to function along with eIF-2. This chain is Probable translation initiation factor IF-2, found in Thermococcus sibiricus (strain DSM 12597 / MM 739).